Reading from the N-terminus, the 490-residue chain is Mitochondria-eating protein (490 aa).

Residues 112–210 (IRELSSVHES…RILRDEVSFL (99 aa)) are a coiled coil. Low complexity-rich tracts occupy residues 224 to 241 (SRSP…SPVR) and 456 to 490 (RSSS…SSRL). Disordered stretches follow at residues 224–253 (SRSP…LTSS) and 455–490 (SRSS…SSRL).

The protein belongs to the MIEAP family.

It is found in the cytoplasm. The protein localises to the mitochondrion outer membrane. It localises to the mitochondrion matrix. Its function is as follows. Key regulator of mitochondrial quality that mediates the repairing or degradation of unhealthy mitochondria in response to mitochondrial damage. Mediator of mitochondrial protein catabolic process (also named MALM) by mediating the degradation of damaged proteins inside mitochondria by promoting the accumulation in the mitochondrial matrix of hydrolases that are characteristic of the lysosomal lumen. Also involved in mitochondrion degradation of damaged mitochondria by promoting the formation of vacuole-like structures (named MIV), which engulf and degrade unhealthy mitochondria by accumulating lysosomes. Binds cardiolipin. May form molecular condensates (non-membrane-bounded organelles) within mitochondria that compartmentalize and promote cardiolipin metabolism. This is Mitochondria-eating protein (spata18) from Danio rerio (Zebrafish).